A 450-amino-acid polypeptide reads, in one-letter code: GTPase Der (450 aa).

2 EngA-type G domains span residues 3–170 and 183–356; these read PTIA…LATG and LKIA…AECS. GTP-binding positions include 9-16, 56-60, 122-125, 189-196, 236-240, and 301-304; these read GRPNVGKS, DTGGL, NKVD, GRPNAGKS, DTAGV, and NKID. Residues 357 to 441 enclose the KH-like domain; that stretch reads LRISTGQLNR…PLNIVFRSTF (85 aa).

The protein belongs to the TRAFAC class TrmE-Era-EngA-EngB-Septin-like GTPase superfamily. EngA (Der) GTPase family. In terms of assembly, associates with the 50S ribosomal subunit.

In terms of biological role, GTPase that plays an essential role in the late steps of ribosome biogenesis. The polypeptide is GTPase Der (Maridesulfovibrio salexigens (strain ATCC 14822 / DSM 2638 / NCIMB 8403 / VKM B-1763) (Desulfovibrio salexigens)).